We begin with the raw amino-acid sequence, 599 residues long: Elongation factor 4 (599 aa).

A tr-type G domain is found at 4–185 (KNIRNFSIIA…VIIKKVPSPK (182 aa)). Residues 16-21 (DHGKST) and 132-135 (NKVD) contribute to the GTP site.

The protein belongs to the TRAFAC class translation factor GTPase superfamily. Classic translation factor GTPase family. LepA subfamily.

It localises to the cell membrane. The enzyme catalyses GTP + H2O = GDP + phosphate + H(+). Required for accurate and efficient protein synthesis under certain stress conditions. May act as a fidelity factor of the translation reaction, by catalyzing a one-codon backward translocation of tRNAs on improperly translocated ribosomes. Back-translocation proceeds from a post-translocation (POST) complex to a pre-translocation (PRE) complex, thus giving elongation factor G a second chance to translocate the tRNAs correctly. Binds to ribosomes in a GTP-dependent manner. The chain is Elongation factor 4 from Mycoplasmoides gallisepticum (strain R(low / passage 15 / clone 2)) (Mycoplasma gallisepticum).